A 239-amino-acid polypeptide reads, in one-letter code: Putative zinc finger protein 132L (239 aa).

The tract at residues 20-40 is disordered; that stretch reads DASLSTKSPKREPSQEKEIKK. The span at 28-40 shows a compositional bias: basic and acidic residues; it reads PKREPSQEKEIKK. 2 C3H1-type zinc fingers span residues 44–68 and 81–106; these read IKKNKPCKYEEECKRSDCVFLHPGE and RRKTRMCKYVKKCNKGKNCPFAHDES. The disordered stretch occupies residues 128 to 151; sequence PGECKFSHPPPPPPSPPSPPPKEE. Pro residues predominate over residues 135-147; sequence HPPPPPPSPPSPP.

This is Putative zinc finger protein 132L from Acheta domesticus (House cricket).